The following is a 320-amino-acid chain: Cytochrome f (320 aa).

An N-terminal signal peptide occupies residues 1-35 (MQTRNAFSWLKKQITRSISVSLMIYILTRTSISSA). The heme site is built by tyrosine 36, cysteine 56, cysteine 59, and histidine 60. The chain crosses the membrane as a helical span at residues 286 to 306 (VQGLLFFLASVILAQIFLVLK).

It belongs to the cytochrome f family. In terms of assembly, the 4 large subunits of the cytochrome b6-f complex are cytochrome b6, subunit IV (17 kDa polypeptide, petD), cytochrome f and the Rieske protein, while the 4 small subunits are PetG, PetL, PetM and PetN. The complex functions as a dimer. Requires heme as cofactor.

The protein resides in the plastid. The protein localises to the chloroplast thylakoid membrane. In terms of biological role, component of the cytochrome b6-f complex, which mediates electron transfer between photosystem II (PSII) and photosystem I (PSI), cyclic electron flow around PSI, and state transitions. The chain is Cytochrome f from Nicotiana sylvestris (Wood tobacco).